Consider the following 310-residue polypeptide: Aspartate carbamoyltransferase catalytic subunit (310 aa).

Arg57 and Thr58 together coordinate carbamoyl phosphate. Lys86 provides a ligand contact to L-aspartate. Residues Arg107, His135, and Gln138 each coordinate carbamoyl phosphate. Residues Arg168 and Arg229 each contribute to the L-aspartate site. 2 residues coordinate carbamoyl phosphate: Leu268 and Pro269.

The protein belongs to the aspartate/ornithine carbamoyltransferase superfamily. ATCase family. In terms of assembly, heterooligomer of catalytic and regulatory chains.

It catalyses the reaction carbamoyl phosphate + L-aspartate = N-carbamoyl-L-aspartate + phosphate + H(+). It functions in the pathway pyrimidine metabolism; UMP biosynthesis via de novo pathway; (S)-dihydroorotate from bicarbonate: step 2/3. In terms of biological role, catalyzes the condensation of carbamoyl phosphate and aspartate to form carbamoyl aspartate and inorganic phosphate, the committed step in the de novo pyrimidine nucleotide biosynthesis pathway. This Thermococcus kodakarensis (strain ATCC BAA-918 / JCM 12380 / KOD1) (Pyrococcus kodakaraensis (strain KOD1)) protein is Aspartate carbamoyltransferase catalytic subunit.